We begin with the raw amino-acid sequence, 61 residues long: Alpha-conotoxin-like Lp1.6a (61 aa).

An N-terminal signal peptide occupies residues 1–21; sequence MGMRMMFIIFLFVVLATTVVS. Positions 22-44 are excised as a propeptide; that stretch reads FTSGRASDGRNAPANNKVSDLIR. At glutamine 45 the chain carries Pyrrolidone carboxylic acid. 2 disulfide bridges follow: cysteine 47–cysteine 53 and cysteine 48–cysteine 60. A Cysteine amide modification is found at cysteine 60.

The protein belongs to the conotoxin A superfamily. As to expression, expressed by the venom duct.

The protein resides in the secreted. Functionally, alpha-conotoxins act on postsynaptic membranes, they bind to the nicotinic acetylcholine receptors (nAChR) and thus inhibit them. This chain is Alpha-conotoxin-like Lp1.6a, found in Conus leopardus (Leopard cone).